A 593-amino-acid chain; its full sequence is Chromosomal replication initiator protein DnaA (593 aa).

The segment at 1–71 (MSDPCWEQCV…EIISNSDAGP (71 aa)) is domain I, interacts with DnaA modulators. The interval 71–256 (PKSLEIAVAQ…DVEGGIQHKH (186 aa)) is domain II. The tract at residues 97–186 (AVPVPDPLPS…STESSADRER (90 aa)) is disordered. Residues 113-124 (SFQPPKGNTSAD) are compositionally biased toward polar residues. The segment at 257-473 (NLNTTFIFDN…GALKRVIANA (217 aa)) is domain III, AAA+ region. Positions 301, 303, 304, and 305 each coordinate ATP. A domain IV, binds dsDNA region spans residues 474–593 (QFTQRSISVE…VKNLLRTLTT (120 aa)).

The protein belongs to the DnaA family. In terms of assembly, oligomerizes as a right-handed, spiral filament on DNA at oriC.

It localises to the cytoplasm. In terms of biological role, plays an essential role in the initiation and regulation of chromosomal replication. ATP-DnaA binds to the origin of replication (oriC) to initiate formation of the DNA replication initiation complex once per cell cycle. Binds the DnaA box (a 9 base pair repeat at the origin) and separates the double-stranded (ds)DNA. Forms a right-handed helical filament on oriC DNA; dsDNA binds to the exterior of the filament while single-stranded (ss)DNA is stabiized in the filament's interior. The ATP-DnaA-oriC complex binds and stabilizes one strand of the AT-rich DNA unwinding element (DUE), permitting loading of DNA polymerase. After initiation quickly degrades to an ADP-DnaA complex that is not apt for DNA replication. Binds acidic phospholipids. This is Chromosomal replication initiator protein DnaA from Teredinibacter turnerae (strain ATCC 39867 / T7901).